A 314-amino-acid polypeptide reads, in one-letter code: Methionyl-tRNA formyltransferase (314 aa).

112-115 (SLLP) contributes to the (6S)-5,6,7,8-tetrahydrofolate binding site.

This sequence belongs to the Fmt family.

The catalysed reaction is L-methionyl-tRNA(fMet) + (6R)-10-formyltetrahydrofolate = N-formyl-L-methionyl-tRNA(fMet) + (6S)-5,6,7,8-tetrahydrofolate + H(+). In terms of biological role, attaches a formyl group to the free amino group of methionyl-tRNA(fMet). The formyl group appears to play a dual role in the initiator identity of N-formylmethionyl-tRNA by promoting its recognition by IF2 and preventing the misappropriation of this tRNA by the elongation apparatus. The sequence is that of Methionyl-tRNA formyltransferase from Aeromonas hydrophila subsp. hydrophila (strain ATCC 7966 / DSM 30187 / BCRC 13018 / CCUG 14551 / JCM 1027 / KCTC 2358 / NCIMB 9240 / NCTC 8049).